A 321-amino-acid chain; its full sequence is CRISPR-associated endonuclease Cas1 2 (321 aa).

Residues glutamate 150, histidine 213, and glutamate 228 each coordinate Mn(2+).

The protein belongs to the CRISPR-associated endonuclease Cas1 family. As to quaternary structure, homodimer, forms a heterotetramer with a Cas2 homodimer. Requires Mg(2+) as cofactor. It depends on Mn(2+) as a cofactor.

In terms of biological role, CRISPR (clustered regularly interspaced short palindromic repeat), is an adaptive immune system that provides protection against mobile genetic elements (viruses, transposable elements and conjugative plasmids). CRISPR clusters contain spacers, sequences complementary to antecedent mobile elements, and target invading nucleic acids. CRISPR clusters are transcribed and processed into CRISPR RNA (crRNA). Acts as a dsDNA endonuclease. Involved in the integration of spacer DNA into the CRISPR cassette. This is CRISPR-associated endonuclease Cas1 2 from Moorella thermoacetica (strain ATCC 39073 / JCM 9320).